A 247-amino-acid chain; its full sequence is 3-oxoacyl-[acyl-carrier-protein] reductase FabG (247 aa).

NADP(+)-binding positions include 12-15 (GASR), threonine 37, 62-63 (DV), and asparagine 89. Serine 141 provides a ligand contact to substrate. Tyrosine 154 (proton acceptor) is an active-site residue. NADP(+) contacts are provided by residues 154–158 (YAAAK) and isoleucine 187.

This sequence belongs to the short-chain dehydrogenases/reductases (SDR) family. As to quaternary structure, homotetramer.

The catalysed reaction is a (3R)-hydroxyacyl-[ACP] + NADP(+) = a 3-oxoacyl-[ACP] + NADPH + H(+). The protein operates within lipid metabolism; fatty acid biosynthesis. Catalyzes the NADPH-dependent reduction of beta-ketoacyl-ACP substrates to beta-hydroxyacyl-ACP products, the first reductive step in the elongation cycle of fatty acid biosynthesis. This is 3-oxoacyl-[acyl-carrier-protein] reductase FabG (fabG) from Pseudomonas aeruginosa (strain ATCC 15692 / DSM 22644 / CIP 104116 / JCM 14847 / LMG 12228 / 1C / PRS 101 / PAO1).